We begin with the raw amino-acid sequence, 241 residues long: Small ribosomal subunit protein uS3 (241 aa).

A KH type-2 domain is found at 39–107; it reads IREVLMKNLK…EVVINIVEVR (69 aa). Positions 219–241 are disordered; sequence MAELDHAGGGGGGERRRRERDAA. A compositionally biased stretch (basic and acidic residues) spans 231-241; sequence GERRRRERDAA.

This sequence belongs to the universal ribosomal protein uS3 family. Part of the 30S ribosomal subunit. Forms a tight complex with proteins S10 and S14.

In terms of biological role, binds the lower part of the 30S subunit head. Binds mRNA in the 70S ribosome, positioning it for translation. The chain is Small ribosomal subunit protein uS3 from Beijerinckia indica subsp. indica (strain ATCC 9039 / DSM 1715 / NCIMB 8712).